The sequence spans 72 residues: UPF0150 protein jhp_0960 (72 aa).

This sequence belongs to the UPF0150 family.

The sequence is that of UPF0150 protein jhp_0960 from Helicobacter pylori (strain J99 / ATCC 700824) (Campylobacter pylori J99).